The following is a 99-amino-acid chain: RNA-binding protein Hfq (99 aa).

The Sm domain occupies 10–71; sequence DLFLNQLRKE…ISSILPSKPI (62 aa). A disordered region spans residues 77–99; it reads VQNSQVQNTASQQSNNNQNQESK.

The protein belongs to the Hfq family. As to quaternary structure, homohexamer.

RNA chaperone that binds small regulatory RNA (sRNAs) and mRNAs to facilitate mRNA translational regulation in response to envelope stress, environmental stress and changes in metabolite concentrations. Also binds with high specificity to tRNAs. The sequence is that of RNA-binding protein Hfq from Caldicellulosiruptor saccharolyticus (strain ATCC 43494 / DSM 8903 / Tp8T 6331).